Consider the following 300-residue polypeptide: MHKIIIIMLFFLVSITWGTTWIAMKIAVETIPPFFATGIRFLAASPLLIILSYLTKKPLLFPYGQRRFQIFISIFYFSIPFTLMLYGGSYVNSSISSIIFANMPVLVLIISHFYLKKKINFIQKVGMVIALITLFFVLLIDLKSECFFQWKGILALLLALLSHAVIYVECQKKSCNVSVITFNALPSLISGIFLSIISWFIESPNINFFSTRSILAVFYLGNFCGICGILSYFYLQKRVSSFYASIVFLIFPLIAGFLEIYIYKKTILLYELWFIIPSGLGILLTLIPINFFKNIIRFSK.

A run of 10 helical transmembrane segments spans residues 4–24 (IIII…WIAM), 31–51 (IPPF…LIIL), 68–88 (FQIF…LYGG), 95–115 (ISSI…HFYL), 120–140 (NFIQ…VLLI), 146–166 (CFFQ…HAVI), 177–197 (VSVI…LSII), 214–234 (ILAV…SYFY), 242–262 (FYAS…EIYI), and 272–292 (LWFI…INFF). 2 EamA domains span residues 15–139 (ITWG…FVLL) and 161–287 (LSHA…LTLI).

The protein belongs to the EamA transporter family.

Its subcellular location is the cell membrane. This is an uncharacterized protein from Buchnera aphidicola subsp. Schizaphis graminum (strain Sg).